Here is a 385-residue protein sequence, read N- to C-terminus: Flap endonuclease 1 (385 aa).

An N-domain region spans residues M1–R104. D34 is a binding site for Mg(2+). Residues R47 and R70 each contribute to the DNA site. The Mg(2+) site is built by D86, E158, E160, D179, and D181. An I-domain region spans residues G122–Y253. E158 is a binding site for DNA. DNA is bound by residues G231 and D233. D233 provides a ligand contact to Mg(2+). Residues T336–F344 are interaction with PCNA. Residues T346 to K385 are disordered. A compositionally biased stretch (basic residues) spans A368–K385.

It belongs to the XPG/RAD2 endonuclease family. FEN1 subfamily. Interacts with PCNA. Three molecules of FEN1 bind to one PCNA trimer with each molecule binding to one PCNA monomer. PCNA stimulates the nuclease activity without altering cleavage specificity. Requires Mg(2+) as cofactor. In terms of processing, phosphorylated. Phosphorylation upon DNA damage induces relocalization to the nuclear plasma.

It localises to the nucleus. Its subcellular location is the nucleolus. The protein localises to the nucleoplasm. The protein resides in the mitochondrion. Structure-specific nuclease with 5'-flap endonuclease and 5'-3' exonuclease activities involved in DNA replication and repair. During DNA replication, cleaves the 5'-overhanging flap structure that is generated by displacement synthesis when DNA polymerase encounters the 5'-end of a downstream Okazaki fragment. It enters the flap from the 5'-end and then tracks to cleave the flap base, leaving a nick for ligation. Also involved in the long patch base excision repair (LP-BER) pathway, by cleaving within the apurinic/apyrimidinic (AP) site-terminated flap. Acts as a genome stabilization factor that prevents flaps from equilibrating into structures that lead to duplications and deletions. Also possesses 5'-3' exonuclease activity on nicked or gapped double-stranded DNA, and exhibits RNase H activity. Also involved in replication and repair of rDNA and in repairing mitochondrial DNA. This chain is Flap endonuclease 1, found in Drosophila sechellia (Fruit fly).